Here is a 314-residue protein sequence, read N- to C-terminus: L-lactate dehydrogenase (314 aa).

NAD(+) contacts are provided by residues Val-17, Asp-38, Lys-43, Tyr-69, and 83–84 (GA). Substrate is bound by residues Gln-86 and Arg-92. Residues Ser-105, 122–124 (ASN), and Ser-147 each bind NAD(+). A substrate-binding site is contributed by 124-127 (NPVD). 152-155 (DSAR) serves as a coordination point for substrate. Beta-D-fructose 1,6-bisphosphate-binding residues include Arg-157 and His-172. The active-site Proton acceptor is His-179. Residue Tyr-223 is modified to Phosphotyrosine. A substrate-binding site is contributed by Thr-232.

Belongs to the LDH/MDH superfamily. LDH family. In terms of assembly, homotetramer.

Its subcellular location is the cytoplasm. The enzyme catalyses (S)-lactate + NAD(+) = pyruvate + NADH + H(+). It participates in fermentation; pyruvate fermentation to lactate; (S)-lactate from pyruvate: step 1/1. With respect to regulation, allosterically activated by fructose 1,6-bisphosphate (FBP). In terms of biological role, catalyzes the conversion of lactate to pyruvate. This Corynebacterium glutamicum (strain ATCC 13032 / DSM 20300 / JCM 1318 / BCRC 11384 / CCUG 27702 / LMG 3730 / NBRC 12168 / NCIMB 10025 / NRRL B-2784 / 534) protein is L-lactate dehydrogenase.